A 347-amino-acid polypeptide reads, in one-letter code: Protein RecA (347 aa).

Residue 64–71 (GPESSGKT) coordinates ATP.

It belongs to the RecA family.

Its subcellular location is the cytoplasm. Functionally, can catalyze the hydrolysis of ATP in the presence of single-stranded DNA, the ATP-dependent uptake of single-stranded DNA by duplex DNA, and the ATP-dependent hybridization of homologous single-stranded DNAs. It interacts with LexA causing its activation and leading to its autocatalytic cleavage. In Bartonella tribocorum (strain CIP 105476 / IBS 506), this protein is Protein RecA.